The chain runs to 384 residues: NADH-quinone oxidoreductase subunit D 2 (384 aa).

It belongs to the complex I 49 kDa subunit family. As to quaternary structure, NDH-1 is composed of 14 different subunits. Subunits NuoB, C, D, E, F, and G constitute the peripheral sector of the complex.

It localises to the cell membrane. It carries out the reaction a quinone + NADH + 5 H(+)(in) = a quinol + NAD(+) + 4 H(+)(out). Functionally, NDH-1 shuttles electrons from NADH, via FMN and iron-sulfur (Fe-S) centers, to quinones in the respiratory chain. The immediate electron acceptor for the enzyme in this species is believed to be a menaquinone. Couples the redox reaction to proton translocation (for every two electrons transferred, four hydrogen ions are translocated across the cytoplasmic membrane), and thus conserves the redox energy in a proton gradient. The chain is NADH-quinone oxidoreductase subunit D 2 from Symbiobacterium thermophilum (strain DSM 24528 / JCM 14929 / IAM 14863 / T).